We begin with the raw amino-acid sequence, 68 residues long: Metallothionein (68 aa).

20 residues coordinate a divalent metal cation: cysteine 7, cysteine 9, cysteine 14, cysteine 16, cysteine 20, cysteine 22, cysteine 25, cysteine 27, cysteine 35, cysteine 39, cysteine 40, cysteine 42, cysteine 43, cysteine 47, cysteine 50, cysteine 54, cysteine 56, cysteine 64, cysteine 66, and cysteine 67.

It belongs to the metallothionein superfamily. Type 1 family.

Functionally, metallothioneins have a high content of cysteine residues that bind various heavy metals. This chain is Metallothionein (mt), found in Scyliorhinus torazame (Cloudy catshark).